The sequence spans 374 residues: Ribosomal RNA large subunit methyltransferase G (374 aa).

The protein belongs to the methyltransferase superfamily. RlmG family.

It localises to the cytoplasm. The catalysed reaction is guanosine(1835) in 23S rRNA + S-adenosyl-L-methionine = N(2)-methylguanosine(1835) in 23S rRNA + S-adenosyl-L-homocysteine + H(+). In terms of biological role, specifically methylates the guanine in position 1835 (m2G1835) of 23S rRNA. This chain is Ribosomal RNA large subunit methyltransferase G, found in Pseudomonas paraeruginosa (strain DSM 24068 / PA7) (Pseudomonas aeruginosa (strain PA7)).